The sequence spans 354 residues: Hyaluronan and proteoglycan link protein 1 (354 aa).

Residues 1–15 constitute a propeptide that is removed on maturation; that stretch reads MKSLLLLVLISFCWA. Residues Asn21 and Asn56 are each glycosylated (N-linked (GlcNAc...) asparagine). Positions 38-152 constitute an Ig-like V-type domain; the sequence is PRLLVEAEQA…EGLEDDTAVV (115 aa). Cystine bridges form between Cys61–Cys139, Cys181–Cys252, Cys205–Cys226, Cys279–Cys349, and Cys304–Cys325. 2 consecutive Link domains span residues 159–254 and 259–351; these read VVFP…FCFT and GRFY…YCFR.

The protein belongs to the HAPLN family.

It localises to the secreted. Its subcellular location is the extracellular space. The protein localises to the extracellular matrix. Functionally, stabilizes the aggregates of proteoglycan monomers with hyaluronic acid in the extracellular cartilage matrix. The polypeptide is Hyaluronan and proteoglycan link protein 1 (HAPLN1) (Bos taurus (Bovine)).